Consider the following 531-residue polypeptide: UDP-glucuronosyltransferase 1A6 (531 aa).

The N-terminal stretch at 1–26 (MACLLPAAQTLPAGFLFLVLWASVLG) is a signal peptide. N-linked (GlcNAc...) asparagine glycosylation is found at asparagine 293 and asparagine 431. A helical membrane pass occupies residues 489–505 (VIGFLLAIVLTVVFIVF).

The protein belongs to the UDP-glycosyltransferase family. Expressed in liver, kidney and at very low levels in colon.

The protein resides in the microsome. It localises to the endoplasmic reticulum membrane. The enzyme catalyses glucuronate acceptor + UDP-alpha-D-glucuronate = acceptor beta-D-glucuronoside + UDP + H(+). It carries out the reaction (5Z,8Z,11Z,14Z)-eicosatetraenoate + UDP-alpha-D-glucuronate = O-[(5Z),(8Z),(11Z),(14Z)-eicosatetraenoyl]-beta-D-glucuronate + UDP. The catalysed reaction is 15-hydroxy-(5Z,8Z,11Z,13E)-eicosatetraenoate + UDP-alpha-D-glucuronate = 15-O-(beta-D-glucuronosyl)-(5Z,8Z,11Z,14Z)-eicosatetraenoate + UDP + H(+). It catalyses the reaction (E)-ferulate + UDP-alpha-D-glucuronate = (E)-4-O-(beta-D-glucuronosyl)-ferulate + UDP + H(+). The enzyme catalyses (E)-ferulate + UDP-alpha-D-glucuronate = (E)-ferulic acid beta-D-glucuronate ester + UDP. In terms of biological role, UDP-glucuronosyltransferase (UGT) that catalyzes phase II biotransformation reactions in which lipophilic substrates are conjugated with glucuronic acid to facilitate their inactivation and excretion from the body. Essential for the elimination and detoxification of drugs, xenobiotics and endogenous compounds. Involved in the glucuronidation of arachidonic acid (AA) and AA-derived eicosanoids including 15-HETE and 20-HETE. Conjugates small planar phenolic molecules such as 4-nitrophenol, 1-naphthol, and 4-methylumbelliferone. The bulky phenol 4-hydroxybiphenyl, androgens and estrogens are not substrates. 2-hydroxybiphenyl is an excellent substrate. Involved in the glucuronidation of the phytochemical ferulic acid at the phenolic or the carboxylic acid group. The polypeptide is UDP-glucuronosyltransferase 1A6 (Mus musculus (Mouse)).